The following is a 556-amino-acid chain: M-phase inducer phosphatase (556 aa).

Disordered stretches follow at residues 165-186 and 257-297; these read STDG…QERR and TSGL…RPRK. The span at 287–297 shows a compositional bias: basic residues; it reads KSAHPNMRPRK. The Rhodanese domain maps to 371–474; that stretch reads MFDNIMIIDC…FFAEHRSLCY (104 aa). The active site involves Cys421. Residues 505 to 516 show a composition bias toward polar residues; the sequence is RAQTFAFGQQSP. The tract at residues 505–556 is disordered; the sequence is RAQTFAFGQQSPEMEDSPTGRCRNNPGDRKLLASPFNDSPGSRFPGRRMLSY.

Belongs to the MPI phosphatase family.

The catalysed reaction is O-phospho-L-tyrosyl-[protein] + H2O = L-tyrosyl-[protein] + phosphate. This protein functions as a dosage-dependent inducer in mitotic control. It is a tyrosine protein phosphatase required for progression of the cell cycle. It may directly dephosphorylate p34(cdc2) and activate the p34(cdc2) kinase activity. The polypeptide is M-phase inducer phosphatase (nimT) (Emericella nidulans (strain FGSC A4 / ATCC 38163 / CBS 112.46 / NRRL 194 / M139) (Aspergillus nidulans)).